The primary structure comprises 405 residues: Eukaryotic initiation factor 4A (405 aa).

The Q motif motif lies at 31–59 (ECFEALNLEGDLLRGIFAYGFEKPSAIQQ). The Helicase ATP-binding domain maps to 62–232 (IKPILDGYDT…TQFMRDPKRI (171 aa)). 75-82 (AQSGTGKT) lines the ATP pocket. The short motif at 180-183 (DEAD) is the DEAD box element. The 162-residue stretch at 243-404 (GIRQFYVGVE…EMPMGITDIL (162 aa)) folds into the Helicase C-terminal domain.

This sequence belongs to the DEAD box helicase family. eIF4A subfamily. EIF4F is a multi-subunit complex, the composition of which varies with external and internal environmental conditions. It is composed of at least EIF4A, EIF4E and EIF4G.

It carries out the reaction ATP + H2O = ADP + phosphate + H(+). Functionally, ATP-dependent RNA helicase which is a subunit of the eIF4F complex involved in cap recognition and is required for mRNA binding to ribosome. In the current model of translation initiation, eIF4A unwinds RNA secondary structures in the 5'-UTR of mRNAs which is necessary to allow efficient binding of the small ribosomal subunit, and subsequent scanning for the initiator codon. The polypeptide is Eukaryotic initiation factor 4A (EIF4-A) (Cryptosporidium parvum).